Reading from the N-terminus, the 273-residue chain is Tyrosinase (273 aa).

Positions 1-18 (MLLFTMGLLLAILQPSTG) are cleaved as a signal peptide. N-linked (GlcNAc...) asparagine glycans are attached at residues asparagine 86, asparagine 111, and asparagine 161. 3 residues coordinate Cu cation: histidine 180, histidine 202, and histidine 211. Asparagine 230 carries an N-linked (GlcNAc...) asparagine glycan.

This sequence belongs to the tyrosinase family. It depends on Cu(2+) as a cofactor.

Its subcellular location is the melanosome membrane. The protein localises to the melanosome. The catalysed reaction is 2 L-dopa + O2 = 2 L-dopaquinone + 2 H2O. It carries out the reaction L-tyrosine + O2 = L-dopaquinone + H2O. Its function is as follows. This is a copper-containing oxidase that functions in the formation of pigments such as melanins and other polyphenolic compounds. Catalyzes the initial and rate limiting step in the cascade of reactions leading to melanin production from tyrosine. In addition to hydroxylating tyrosine to DOPA (3,4-dihydroxyphenylalanine), also catalyzes the oxidation of DOPA to DOPA-quinone, and possibly the oxidation of DHI (5,6-dihydroxyindole) to indole-5,6 quinone. The polypeptide is Tyrosinase (TYR) (Coturnix japonica (Japanese quail)).